The chain runs to 424 residues: L-glutamine:2-deoxy-scyllo-inosose aminotransferase (424 aa).

Lys202 carries the post-translational modification N6-(pyridoxal phosphate)lysine.

Belongs to the DegT/DnrJ/EryC1 family. L-glutamine:2-deoxy-scyllo-inosose/scyllo-inosose aminotransferase subfamily. Pyridoxal 5'-phosphate serves as cofactor.

It catalyses the reaction 2-deoxy-L-scyllo-inosose + L-glutamine = 2-deoxy-scyllo-inosamine + 2-oxoglutaramate. The catalysed reaction is 3-amino-2,3-dideoxy-scyllo-inosose + L-glutamine = 2-deoxystreptamine + 2-oxoglutaramate. The protein operates within metabolic intermediate biosynthesis; 2-deoxystreptamine biosynthesis; 2-deoxystreptamine from D-glucose 6-phosphate: step 2/4. It participates in metabolic intermediate biosynthesis; 2-deoxystreptamine biosynthesis; 2-deoxystreptamine from D-glucose 6-phosphate: step 4/4. Its pathway is antibiotic biosynthesis; ribostamycin biosynthesis. Its function is as follows. Catalyzes the PLP-dependent transamination of 2-deoxy-scyllo-inosose (2-DOI) to form 2-deoxy-scyllo-inosamine (2-DOIA) using L-glutamine as the amino donor. Also catalyzes the transamination of 3-amino-2,3-dideoxy-scyllo-inosose (keto-2-DOIA) into 2-deoxystreptamine (2-DOS). This chain is L-glutamine:2-deoxy-scyllo-inosose aminotransferase (rbmB), found in Streptomyces ribosidificus.